The chain runs to 1387 residues: Regulator of G-protein signaling 12 (1387 aa).

A PDZ domain is found at 21–97 (SVEVARGRAG…GVLRMVISEG (77 aa)). A phosphoserine mark is found at Ser171 and Ser194. Residue Lys195 forms a Glycyl lysine isopeptide (Lys-Gly) (interchain with G-Cter in SUMO2) linkage. In terms of domain architecture, PID spans 227-339 (VAMVVGYLGS…GALRTSCHVF (113 aa)). Disordered regions lie at residues 409–428 (ADAHQNNSTSSNSDSGIGNF) and 442–488 (LGGG…PLET). Polar residues predominate over residues 412-428 (HQNNSTSSNSDSGIGNF). Omega-N-methylarginine occurs at positions 524 and 633. Positions 620-650 (RKTKEDKKSSKLGRGVALAQTSQRTSARRSF) are disordered. Phosphoserine is present on residues Ser661 and Ser671. Residues 715–832 (SFERLLQDPV…LKSQLYQECV (118 aa)) form the RGS domain. The disordered stretch occupies residues 842-934 (PDSQQVPSSP…ANGGLCRRES (93 aa)). Over residues 849–869 (SSPASKHSISSDHSNVSTPKK) the composition is skewed to low complexity. A phosphoserine mark is found at Ser850 and Ser879. Basic and acidic residues predominate over residues 914–923 (DHGDHAHDAL). Position 943 is a phosphoserine (Ser943). 2 consecutive RBD domains span residues 962–1032 (KHCC…LGKR) and 1034–1104 (LFRL…LEER). Basic and acidic residues predominate over residues 1103–1117 (ERDPSRGKVSTEKQK). The tract at residues 1103–1168 (ERDPSRGKVS…ARDPRLSKRE (66 aa)) is disordered. The segment covering 1122-1133 (KQSSAVNSSPRN) has biased composition (polar residues). The span at 1151–1168 (IRGENGKSARDPRLSKRE) shows a compositional bias: basic and acidic residues. Residues 1187–1209 (AEEFFELISKAQSNRADDQRGLL) enclose the GoLoco domain. Disordered stretches follow at residues 1224–1325 (PGSS…EGTT) and 1349–1387 (ADLTLMGEGDISSPNSTLLPPPPLPQDTPGPTRPGTSRF). A compositionally biased stretch (low complexity) spans 1261–1280 (SDSPATSPASAQSPCSAYSP). Residues 1315 to 1325 (SCISTVQEGTT) are compositionally biased toward polar residues. Residues 1367 to 1380 (LPPPPLPQDTPGPT) show a composition bias toward pro residues.

In terms of assembly, interacts with GNAI1, GNAI2 and GNAI3; the interactions are GDP-dependent. As to expression, detected in brain cortex GABAergic neurons, in striatum and substantia nigra, and in the Purkinje cell layer in the cerebellum and hippocampus (at protein level). Expressed at high levels in brain and lung and lower levels in testis, heart, and spleen.

The protein resides in the nucleus. It localises to the cytoplasm. It is found in the cell projection. Its subcellular location is the dendrite. The protein localises to the synapse. Functionally, regulates G protein-coupled receptor signaling cascades. Inhibits signal transduction by increasing the GTPase activity of G protein alpha subunits, thereby driving them into their inactive GDP-bound form. In Rattus norvegicus (Rat), this protein is Regulator of G-protein signaling 12 (Rgs12).